Here is a 637-residue protein sequence, read N- to C-terminus: 1,4-alpha-glucan branching enzyme GlgB (637 aa).

Aspartate 307 functions as the Nucleophile in the catalytic mechanism. Glutamate 361 acts as the Proton donor in catalysis.

It belongs to the glycosyl hydrolase 13 family. GlgB subfamily. Monomer.

It carries out the reaction Transfers a segment of a (1-&gt;4)-alpha-D-glucan chain to a primary hydroxy group in a similar glucan chain.. It functions in the pathway glycan biosynthesis; glycogen biosynthesis. In terms of biological role, catalyzes the formation of the alpha-1,6-glucosidic linkages in glycogen by scission of a 1,4-alpha-linked oligosaccharide from growing alpha-1,4-glucan chains and the subsequent attachment of the oligosaccharide to the alpha-1,6 position. This chain is 1,4-alpha-glucan branching enzyme GlgB, found in Oceanobacillus iheyensis (strain DSM 14371 / CIP 107618 / JCM 11309 / KCTC 3954 / HTE831).